The primary structure comprises 819 residues: Kinesin-like protein KIN-13A (819 aa).

The interval 150–178 is disordered; it reads EPFEPSPFIPKEMDEDDDDMLPGSQPGPS. Residues 199-535 enclose the Kinesin motor domain; it reads KIKVVVRKRP…LRYADRVKSL (337 aa). 289–296 contacts ATP; it reads GQTGSGKT. The tract at residues 534–729 is disordered; sequence SLSKGSNTRK…QSEKESSCDD (196 aa). Over residues 550–562 the composition is skewed to low complexity; the sequence is TIPSSKDSSSAPS. 2 stretches are compositionally biased toward basic and acidic residues: residues 577 to 589 and 614 to 631; these read QEKRPVETSRKAA and RGKEENGSSGLNDRERVD. Polar residues predominate over residues 632 to 652; it reads LNSSRISYNSKPQSVQSSANL. Residues 669–686 show a composition bias toward basic and acidic residues; the sequence is YRDDKPERQSNYAKKDSG. The span at 697–719 shows a compositional bias: low complexity; sequence QQAKQLQQQQRPTSASASQNSSR. A coiled-coil region spans residues 736 to 767; the sequence is LEEEEALIAAHRKEIENTMEIVREEMNLLAEV.

It belongs to the TRAFAC class myosin-kinesin ATPase superfamily. Kinesin family. KIN-13 subfamily. In terms of tissue distribution, ubiquitous.

The protein localises to the microsome. The sequence is that of Kinesin-like protein KIN-13A from Oryza sativa subsp. japonica (Rice).